The primary structure comprises 265 residues: Hydroxyethylthiazole kinase 2 (265 aa).

M39 provides a ligand contact to substrate. 2 residues coordinate ATP: K115 and T168. Residue G195 coordinates substrate.

The protein belongs to the Thz kinase family. Mg(2+) serves as cofactor.

The enzyme catalyses 5-(2-hydroxyethyl)-4-methylthiazole + ATP = 4-methyl-5-(2-phosphooxyethyl)-thiazole + ADP + H(+). Its pathway is cofactor biosynthesis; thiamine diphosphate biosynthesis; 4-methyl-5-(2-phosphoethyl)-thiazole from 5-(2-hydroxyethyl)-4-methylthiazole: step 1/1. Functionally, catalyzes the phosphorylation of the hydroxyl group of 4-methyl-5-beta-hydroxyethylthiazole (THZ). The protein is Hydroxyethylthiazole kinase 2 of Clostridium botulinum (strain ATCC 19397 / Type A).